The following is a 338-amino-acid chain: Ketol-acid reductoisomerase (NADP(+)) (338 aa).

Positions 1 to 181 (MKVFYDKDCD…GGGRAGIIET (181 aa)) constitute a KARI N-terminal Rossmann domain. Residues 24 to 27 (YGSQ), Arg47, and Ser52 contribute to the NADP(+) site. Residue His107 is part of the active site. Gly133 provides a ligand contact to NADP(+). Positions 182 to 327 (NFREETETDL…GKLRAMMPWI (146 aa)) constitute a KARI C-terminal knotted domain. Asp190, Glu194, Glu226, and Glu230 together coordinate Mg(2+). Ser251 serves as a coordination point for substrate.

This sequence belongs to the ketol-acid reductoisomerase family. Mg(2+) is required as a cofactor.

The enzyme catalyses (2R)-2,3-dihydroxy-3-methylbutanoate + NADP(+) = (2S)-2-acetolactate + NADPH + H(+). The catalysed reaction is (2R,3R)-2,3-dihydroxy-3-methylpentanoate + NADP(+) = (S)-2-ethyl-2-hydroxy-3-oxobutanoate + NADPH + H(+). The protein operates within amino-acid biosynthesis; L-isoleucine biosynthesis; L-isoleucine from 2-oxobutanoate: step 2/4. Its pathway is amino-acid biosynthesis; L-valine biosynthesis; L-valine from pyruvate: step 2/4. Functionally, involved in the biosynthesis of branched-chain amino acids (BCAA). Catalyzes an alkyl-migration followed by a ketol-acid reduction of (S)-2-acetolactate (S2AL) to yield (R)-2,3-dihydroxy-isovalerate. In the isomerase reaction, S2AL is rearranged via a Mg-dependent methyl migration to produce 3-hydroxy-3-methyl-2-ketobutyrate (HMKB). In the reductase reaction, this 2-ketoacid undergoes a metal-dependent reduction by NADPH to yield (R)-2,3-dihydroxy-isovalerate. The protein is Ketol-acid reductoisomerase (NADP(+)) of Bordetella bronchiseptica (strain ATCC BAA-588 / NCTC 13252 / RB50) (Alcaligenes bronchisepticus).